We begin with the raw amino-acid sequence, 354 residues long: Guanine nucleotide-binding protein G(o) subunit alpha (354 aa).

Glycine 2 is lipidated: N-myristoyl glycine. A lipid anchor (S-palmitoyl cysteine) is attached at cysteine 3. One can recognise a G-alpha domain in the interval 32-354 (KDVKLLLLGA…ANNLRGCGLY (323 aa)). Positions 35–48 (KLLLLGAGESGKST) are G1 motif. Residues glutamate 43, lysine 46, serine 47, threonine 48, serine 152, leucine 176, arginine 177, threonine 178, and arginine 179 each contribute to the GTP site. Serine 47 provides a ligand contact to Mg(2+). The segment at 174 to 182 (DILRTRVKT) is G2 motif. A Mg(2+)-binding site is contributed by threonine 182. The segment at 197-206 (FRLFDVGGQR) is G3 motif. Glutamine 205 bears the 5-glutamyl histamine mark. The G4 motif stretch occupies residues 266-273 (ILFLNKKD). GTP-binding residues include asparagine 270, aspartate 273, and cysteine 325. Residues 324-329 (TCATDT) are G5 motif. Residue cysteine 351 is the site of S-palmitoyl cysteine attachment.

Belongs to the G-alpha family. G(i/o/t/z) subfamily. G proteins are composed of 3 units; alpha, beta and gamma. The alpha chain contains the guanine nucleotide binding site. Forms a complex with GNB1 and GNG3. Interacts with RGS14. Interacts with RGS16. Interacts with RGS19. Interacts (when palmitoylated) with ADGRG3. Histaminylated at Gln-205 residues by TGM2.

Its subcellular location is the cell membrane. It localises to the membrane. It carries out the reaction GTP + H2O = GDP + phosphate + H(+). The GTPase activity is promoted by GTPAse activators, such as RGS14, RGS16 and RGS19. Guanine nucleotide-binding proteins (G proteins) function as transducers downstream of G protein-coupled receptors (GPCRs) in numerous signaling cascades. The alpha chain contains the guanine nucleotide binding site and alternates between an active, GTP-bound state and an inactive, GDP-bound state. Signaling by an activated GPCR promotes GDP release and GTP binding. The alpha subunit has a low GTPase activity that converts bound GTP to GDP, thereby terminating the signal. Both GDP release and GTP hydrolysis are modulated by numerous regulatory proteins. Signaling is mediated via effector proteins, such as adenylate cyclase. Inhibits adenylate cyclase activity, leading to decreased intracellular cAMP levels. In Mus musculus (Mouse), this protein is Guanine nucleotide-binding protein G(o) subunit alpha (Gnao1).